We begin with the raw amino-acid sequence, 378 residues long: 3-ketosteroid-9-alpha-monooxygenase, oxygenase component (378 aa).

The Rieske domain occupies 26 to 128; it reads WHCIGLAKDF…TMERNGVLFV (103 aa). Cys67, His69, Cys86, and His89 together coordinate [2Fe-2S] cluster. 4 residues coordinate Fe cation: Asn175, His181, His186, and Asp305.

As to quaternary structure, homotrimer. The two-component system 3-ketosteroid-9-alpha-monooxygenase is composed of an oxygenase component KshA and a reductase component KshB. Requires [2Fe-2S] cluster as cofactor. The cofactor is Fe cation.

It catalyses the reaction androsta-1,4-diene-3,17-dione + 2 reduced [2Fe-2S]-[ferredoxin] + O2 + 2 H(+) = 9alpha-hydroxyandrosta-1,4-diene-3,17-dione + 2 oxidized [2Fe-2S]-[ferredoxin] + H2O. With respect to regulation, KSH activity is completely inhibited by zinc ions. KshA is specifically inhibited by Fe(3+), Co(2+), Zn(2+) and Ni(2+) ions. In terms of biological role, in vitro, catalyzes the introduction of a 9alpha-hydroxyl moiety into the ring B of 3-ketosteroid substrates such as 1,4-androstadiene-3,17-dione (ADD), 4-androstene-3,17-dione (AD), 4-androstene-17beta-ol-3-one (testosterone), 4-pregnene-3,20-dione (progesterone), 19-nor-4-androstene-3,17-dione (nordion), 1-(5alpha)-androstene-3,17-dione, 5alpha-androstane-3,17-dione and 5beta-androstane-3,17-dione. KSH has the highest activity with 3-keto-delta4 steroid substrates. The sequence is that of 3-ketosteroid-9-alpha-monooxygenase, oxygenase component from Rhodococcus rhodochrous.